The primary structure comprises 486 residues: tRNA sulfurtransferase (486 aa).

The region spanning 63-167 (DAFAERLGCI…HEKLYMVVRR (105 aa)) is the THUMP domain. ATP-binding positions include 185–186 (LI), lysine 267, glycine 289, and glutamine 298. A disulfide bond links cysteine 346 and cysteine 460. The region spanning 408–486 (VDTQEVVIDI…GYTNVKVYRP (79 aa)) is the Rhodanese domain. The Cysteine persulfide intermediate role is filled by cysteine 460.

This sequence belongs to the ThiI family.

It is found in the cytoplasm. It catalyses the reaction [ThiI sulfur-carrier protein]-S-sulfanyl-L-cysteine + a uridine in tRNA + 2 reduced [2Fe-2S]-[ferredoxin] + ATP + H(+) = [ThiI sulfur-carrier protein]-L-cysteine + a 4-thiouridine in tRNA + 2 oxidized [2Fe-2S]-[ferredoxin] + AMP + diphosphate. The catalysed reaction is [ThiS sulfur-carrier protein]-C-terminal Gly-Gly-AMP + S-sulfanyl-L-cysteinyl-[cysteine desulfurase] + AH2 = [ThiS sulfur-carrier protein]-C-terminal-Gly-aminoethanethioate + L-cysteinyl-[cysteine desulfurase] + A + AMP + 2 H(+). The protein operates within cofactor biosynthesis; thiamine diphosphate biosynthesis. Functionally, catalyzes the ATP-dependent transfer of a sulfur to tRNA to produce 4-thiouridine in position 8 of tRNAs, which functions as a near-UV photosensor. Also catalyzes the transfer of sulfur to the sulfur carrier protein ThiS, forming ThiS-thiocarboxylate. This is a step in the synthesis of thiazole, in the thiamine biosynthesis pathway. The sulfur is donated as persulfide by IscS. The chain is tRNA sulfurtransferase from Shewanella denitrificans (strain OS217 / ATCC BAA-1090 / DSM 15013).